Reading from the N-terminus, the 2167-residue chain is Glutamate synthase 1 [NADH], chloroplastic (2167 aa).

The disordered stretch occupies residues 1 to 31 (MSAAQGMAYKLRTDAAPTGAGRRARRSHSSV). A chloroplast-targeting transit peptide spans 1–36 (MSAAQGMAYKLRTDAAPTGAGRRARRSHSSVAAPYR). The active-site Nucleophile is the Cys-100. The region spanning 100–504 (CGVGFVAELS…PGMMLLVDFE (405 aa)) is the Glutamine amidotransferase type-2 domain. Residues 1022-1042 (KSNTGEGGEQPSRMEPLANGS) form a disordered region. 1192-1249 (LAETHQTLVANGLRGRAILQTDGQLKTGKDVAVACLLGAEEFGFSTAPLITLGCIMMR) serves as a coordination point for FMN. 3 residues coordinate [3Fe-4S] cluster: Cys-1245, Cys-1251, and Cys-1256. Residue 1956-1970 (GGGDTGTDCIGTSIR) participates in NAD(+) binding.

The protein belongs to the glutamate synthase family. As to quaternary structure, monomer. Requires [3Fe-4S] cluster as cofactor. FAD serves as cofactor. The cofactor is FMN. In terms of tissue distribution, highly expressed in roots.

The protein localises to the plastid. The protein resides in the chloroplast. It carries out the reaction 2 L-glutamate + NAD(+) = L-glutamine + 2-oxoglutarate + NADH + H(+). The protein operates within amino-acid biosynthesis; L-glutamate biosynthesis via GLT pathway; L-glutamate from 2-oxoglutarate and L-glutamine (NAD(+) route): step 1/1. It functions in the pathway energy metabolism; nitrogen metabolism. Involved in glutamate biosynthesis and plays a major role in the primary ammonium ions assimilation in seedling roots. May be involved in the reutilization of glutamine in developing organs. Plays a role in the development of tillers. This chain is Glutamate synthase 1 [NADH], chloroplastic, found in Oryza sativa subsp. japonica (Rice).